Here is a 100-residue protein sequence, read N- to C-terminus: Putative exopolysaccharide production repressor protein y4xQ (100 aa).

The next 2 membrane-spanning stretches (helical) occupy residues 9-29 (ILWL…GSIS) and 35-55 (TMVG…FLLW). The segment at 66–100 (TTGQFHGEEQPGDPRIAGTHGRTDGDPCFEDEDSR) is disordered.

This sequence to Rhizobium exopolysaccharide production repressor protein (ExoX).

Its subcellular location is the cell membrane. Functionally, could be involved in the inhibition of exopolysaccharide synthesis (EPS) and nodulation ability (nod). The protein is Putative exopolysaccharide production repressor protein y4xQ of Sinorhizobium fredii (strain NBRC 101917 / NGR234).